A 148-amino-acid chain; its full sequence is 3-hydroxyacyl-[acyl-carrier-protein] dehydratase FabZ (148 aa).

Residue His49 is part of the active site.

It belongs to the thioester dehydratase family. FabZ subfamily.

Its subcellular location is the cytoplasm. The enzyme catalyses a (3R)-hydroxyacyl-[ACP] = a (2E)-enoyl-[ACP] + H2O. In terms of biological role, involved in unsaturated fatty acids biosynthesis. Catalyzes the dehydration of short chain beta-hydroxyacyl-ACPs and long chain saturated and unsaturated beta-hydroxyacyl-ACPs. The chain is 3-hydroxyacyl-[acyl-carrier-protein] dehydratase FabZ from Ehrlichia canis (strain Jake).